We begin with the raw amino-acid sequence, 153 residues long: Neuromedin-S (153 aa).

A signal peptide spans 1-26 (MKHLRPQFPLILAIYCFCMLQIPSSG). Propeptides lie at residues 27–69 (FPQP…IYKR), 70–105 (FLFH…ANRR), and 106–108 (MKR). At Asn-141 the chain carries Asparagine amide. Positions 144–153 (NIEDEAQIQW) are excised as a propeptide.

The protein belongs to the NmU family.

The protein localises to the secreted. Functionally, implicated in the regulation of circadian rhythms through autocrine and/or paracrine actions. This Homo sapiens (Human) protein is Neuromedin-S (NMS).